A 248-amino-acid chain; its full sequence is Deoxyribose-phosphate aldolase (248 aa).

Asp117 (proton donor/acceptor) is an active-site residue. Lys179 serves as the catalytic Schiff-base intermediate with acetaldehyde. Lys208 acts as the Proton donor/acceptor in catalysis.

It belongs to the DeoC/FbaB aldolase family. DeoC type 1 subfamily.

The protein localises to the cytoplasm. The enzyme catalyses 2-deoxy-D-ribose 5-phosphate = D-glyceraldehyde 3-phosphate + acetaldehyde. It functions in the pathway carbohydrate degradation; 2-deoxy-D-ribose 1-phosphate degradation; D-glyceraldehyde 3-phosphate and acetaldehyde from 2-deoxy-alpha-D-ribose 1-phosphate: step 2/2. In terms of biological role, catalyzes a reversible aldol reaction between acetaldehyde and D-glyceraldehyde 3-phosphate to generate 2-deoxy-D-ribose 5-phosphate. The chain is Deoxyribose-phosphate aldolase from Thermotoga sp. (strain RQ2).